Here is a 166-residue protein sequence, read N- to C-terminus: Large ribosomal subunit protein uL10 (166 aa).

Belongs to the universal ribosomal protein uL10 family. As to quaternary structure, part of the ribosomal stalk of the 50S ribosomal subunit. The N-terminus interacts with L11 and the large rRNA to form the base of the stalk. The C-terminus forms an elongated spine to which L12 dimers bind in a sequential fashion forming a multimeric L10(L12)X complex.

Its function is as follows. Forms part of the ribosomal stalk, playing a central role in the interaction of the ribosome with GTP-bound translation factors. The polypeptide is Large ribosomal subunit protein uL10 (Ectopseudomonas mendocina (strain ymp) (Pseudomonas mendocina)).